Reading from the N-terminus, the 132-residue chain is Agouti-signaling protein (132 aa).

The signal sequence occupies residues 1–22 (MDVTRLVLATLLVFLCFFAAYS). Residue N39 is glycosylated (N-linked (GlcNAc...) asparagine). The segment at 60 to 93 (KKISRKEAEKRRSSKKEASKQKVARPRTPLSVPC) is disordered. The segment covering 64–79 (RKEAEKRRSSKKEASK) has biased composition (basic and acidic residues). Intrachain disulfides connect C93-C108, C100-C114, C107-C125, C111-C132, and C116-C123. The Agouti domain occupies 93–132 (CVSTRGSCKPPAPACCHPCASCQCRFFRSACSCRVLNVNC).

It localises to the secreted. Functionally, involved in the regulation of melanogenesis. The binding of ASP to MC1R precludes alpha-MSH initiated signaling and thus blocks production of cAMP, leading to a down-regulation of eumelanogenesis (brown/black pigment) and thus increasing synthesis of pheomelanin (yellow/red pigment). This chain is Agouti-signaling protein (ASIP), found in Cebuella pygmaea (Pygmy marmoset).